The sequence spans 398 residues: Dual-specificity RNA methyltransferase RlmN (398 aa).

Catalysis depends on E119, which acts as the Proton acceptor. Positions 125-364 constitute a Radical SAM core domain; sequence EADRATLCVS…TIVRKTRGDD (240 aa). A disulfide bond links C132 and C369. [4Fe-4S] cluster is bound by residues C139, C143, and C146. Residues 193 to 194, S225, 247 to 249, and N326 each bind S-adenosyl-L-methionine; these read GE and SLH. Residue C369 is the S-methylcysteine intermediate of the active site.

Belongs to the radical SAM superfamily. RlmN family. [4Fe-4S] cluster is required as a cofactor.

The protein resides in the cytoplasm. It catalyses the reaction adenosine(2503) in 23S rRNA + 2 reduced [2Fe-2S]-[ferredoxin] + 2 S-adenosyl-L-methionine = 2-methyladenosine(2503) in 23S rRNA + 5'-deoxyadenosine + L-methionine + 2 oxidized [2Fe-2S]-[ferredoxin] + S-adenosyl-L-homocysteine. The catalysed reaction is adenosine(37) in tRNA + 2 reduced [2Fe-2S]-[ferredoxin] + 2 S-adenosyl-L-methionine = 2-methyladenosine(37) in tRNA + 5'-deoxyadenosine + L-methionine + 2 oxidized [2Fe-2S]-[ferredoxin] + S-adenosyl-L-homocysteine. Specifically methylates position 2 of adenine 2503 in 23S rRNA and position 2 of adenine 37 in tRNAs. m2A2503 modification seems to play a crucial role in the proofreading step occurring at the peptidyl transferase center and thus would serve to optimize ribosomal fidelity. The protein is Dual-specificity RNA methyltransferase RlmN of Yersinia pestis.